Reading from the N-terminus, the 364-residue chain is Dual-specificity RNA methyltransferase RlmN (364 aa).

Catalysis depends on glutamate 91, which acts as the Proton acceptor. In terms of domain architecture, Radical SAM core spans 102 to 337 (GTLRITQCLS…AIIRKSKGQD (236 aa)). Cysteine 109 and cysteine 342 are joined by a disulfide. Cysteine 116, cysteine 120, and cysteine 123 together coordinate [4Fe-4S] cluster. Residues 169-170 (GE), serine 201, 223-225 (SLH), and asparagine 299 each bind S-adenosyl-L-methionine. Residue cysteine 342 is the S-methylcysteine intermediate of the active site.

Belongs to the radical SAM superfamily. RlmN family. The cofactor is [4Fe-4S] cluster.

It localises to the cytoplasm. It catalyses the reaction adenosine(2503) in 23S rRNA + 2 reduced [2Fe-2S]-[ferredoxin] + 2 S-adenosyl-L-methionine = 2-methyladenosine(2503) in 23S rRNA + 5'-deoxyadenosine + L-methionine + 2 oxidized [2Fe-2S]-[ferredoxin] + S-adenosyl-L-homocysteine. It carries out the reaction adenosine(37) in tRNA + 2 reduced [2Fe-2S]-[ferredoxin] + 2 S-adenosyl-L-methionine = 2-methyladenosine(37) in tRNA + 5'-deoxyadenosine + L-methionine + 2 oxidized [2Fe-2S]-[ferredoxin] + S-adenosyl-L-homocysteine. Functionally, specifically methylates position 2 of adenine 2503 in 23S rRNA and position 2 of adenine 37 in tRNAs. m2A2503 modification seems to play a crucial role in the proofreading step occurring at the peptidyl transferase center and thus would serve to optimize ribosomal fidelity. The chain is Dual-specificity RNA methyltransferase RlmN from Nitratidesulfovibrio vulgaris (strain DP4) (Desulfovibrio vulgaris).